The chain runs to 66 residues: Large ribosomal subunit protein bL35 (66 aa).

This sequence belongs to the bacterial ribosomal protein bL35 family.

This is Large ribosomal subunit protein bL35 from Deinococcus deserti (strain DSM 17065 / CIP 109153 / LMG 22923 / VCD115).